We begin with the raw amino-acid sequence, 97 residues long: Large ribosomal subunit protein uL23 (97 aa).

Belongs to the universal ribosomal protein uL23 family. Part of the 50S ribosomal subunit. Contacts protein L29, and trigger factor when it is bound to the ribosome.

In terms of biological role, one of the early assembly proteins it binds 23S rRNA. One of the proteins that surrounds the polypeptide exit tunnel on the outside of the ribosome. Forms the main docking site for trigger factor binding to the ribosome. The chain is Large ribosomal subunit protein uL23 from Agrobacterium fabrum (strain C58 / ATCC 33970) (Agrobacterium tumefaciens (strain C58)).